The primary structure comprises 269 residues: 15-hydroxyprostaglandin dehydrogenase [NAD(+)] (269 aa).

NAD(+)-binding positions include 12 to 20 (GAAQGIGKA), 36 to 37 (DW), 63 to 65 (CDV), and Asn91. The substrate site is built by Ser138 and Gln148. Tyr151 (proton acceptor) is an active-site residue. NAD(+) is bound by residues 151 to 155 (YCASK) and 186 to 188 (VDT).

The protein belongs to the short-chain dehydrogenases/reductases (SDR) family. Homodimer. Expressed in proximal convoluted tubules of the kidney, where it colocalizes with the prostaglandin transporter SLC22A22 (at protein level). Expressed in lung, intestine, stomach and liver.

It localises to the cytoplasm. The catalysed reaction is prostaglandin E2 + NAD(+) = 15-oxoprostaglandin E2 + NADH + H(+). It carries out the reaction (15S)-hydroxy-(5Z,8Z,11Z,13E)-eicosatetraenoate + NAD(+) = 15-oxo-(5Z,8Z,11Z,13E)-eicosatetraenoate + NADH + H(+). The enzyme catalyses (11R)-hydroxy-(5Z,8Z,12E,14Z)-eicosatetraenoate + NAD(+) = 11-oxo-(5Z,8Z,12E,14Z)-eicosatetraenoate + NADH + H(+). It catalyses the reaction lipoxin A4 + NAD(+) = 15-oxo-(5S,6R)-dihydroxy-(7E,9E,11Z,13E)-eicosatetraenoate + NADH + H(+). The catalysed reaction is 15-oxo-(5S,6R)-dihydroxy-(7E,9E,11Z)-eicosatrienoate + NADH + H(+) = (5S,6R,15S)-trihydroxy-(7E,9E,11Z)-eicosatrienoate + NAD(+). It carries out the reaction prostaglandin A1 + NAD(+) = 15-oxo-prostaglandin A1 + NADH + H(+). The enzyme catalyses prostaglandin E1 + NAD(+) = 15-oxoprostaglandin E1 + NADH + H(+). It catalyses the reaction 14-hydroxy-(4Z,7Z,10Z,12E,16Z,19Z)-docosahexaenoate + NAD(+) = 14-oxo-(4Z,7Z,10Z,12E,16Z,19Z)-docosahexaenoate + NADH + H(+). The catalysed reaction is resolvin E1 + NAD(+) = 18-oxo-resolvin E1 + NADH + H(+). It carries out the reaction resolvin D1 + NAD(+) = 8-oxoresolvin D1 + NADH + H(+). The enzyme catalyses resolvin D1 + NAD(+) = 17-oxoresolvin D1 + NADH + H(+). It catalyses the reaction resolvin D2 + NAD(+) = 7-oxoresolvin D2 + NADH + H(+). The catalysed reaction is resolvin D2 + NAD(+) = 16-oxoresolvin D2 + NADH + H(+). Functionally, catalyzes the NAD-dependent dehydrogenation (oxidation) of a broad array of hydroxylated polyunsaturated fatty acids (mainly eicosanoids and docosanoids, including prostaglandins, lipoxins and resolvins), yielding their corresponding keto (oxo) metabolites. Decreases the levels of the pro-proliferative prostaglandins such as prostaglandin E2 (whose activity is increased in cancer because of an increase in the expression of cyclooxygenase 2) and generates oxo-fatty acid products that can profoundly influence cell function by abrogating pro-inflammatory cytokine expression. Converts resolvins E1, D1 and D2 to their oxo products, which represents a mode of resolvin inactivation. Resolvin E1 plays important roles during the resolution phase of acute inflammation, while resolvins D1 and D2 have a unique role in obesity-induced adipose inflammation. This chain is 15-hydroxyprostaglandin dehydrogenase [NAD(+)] (Hpgd), found in Mus musculus (Mouse).